The primary structure comprises 561 residues: uncharacterized protein (561 aa).

The segment covering 1-11 has biased composition (polar residues); the sequence is MSQVSLPSQLK. 2 disordered regions span residues 1–22 and 522–561; these read MSQV…SRCR and CSLP…IMLP. Low complexity predominate over residues 541-561; sequence QQPQQAQAEQAQQPQQQIMLP.

It to Synechocystis PCC 6803 sll0335 and to M.tuberculosis Rv2567.

This is an uncharacterized protein from Mycobacterium leprae (strain TN).